The chain runs to 327 residues: MHAPRFWSGGDGGWPARLLAPAAALYTLATARRMRGTGWRAPVPVLCCGNLTAGGAGKTTVALDLAARLVARGRHVHILTRGYGGRARGPLLVDPARHSAAEVGDEALLLARVAPCHVSADRAAGARAAVAAGADCLVMDDGFQNPGLRQDMGLLVIDGGSGFGNGHVLPAGPLREPVAQGCRRARAAILIGGDRTGALAHLPPALPVLRADLAMQEAAPMLAGRPAIAFAGIGRPDKFFDGLRAQGIRLAACLPFPDHHAYRPRDVRRLSAMAAVQGAVLLTTPKDAVRLPPAIRAQVRSVDVTLAWADPMAPERLLDMWLDKASS.

Threonine 52 to threonine 59 is an ATP binding site.

It belongs to the LpxK family.

The catalysed reaction is a lipid A disaccharide + ATP = a lipid IVA + ADP + H(+). It participates in glycolipid biosynthesis; lipid IV(A) biosynthesis; lipid IV(A) from (3R)-3-hydroxytetradecanoyl-[acyl-carrier-protein] and UDP-N-acetyl-alpha-D-glucosamine: step 6/6. Transfers the gamma-phosphate of ATP to the 4'-position of a tetraacyldisaccharide 1-phosphate intermediate (termed DS-1-P) to form tetraacyldisaccharide 1,4'-bis-phosphate (lipid IVA). The protein is Tetraacyldisaccharide 4'-kinase of Gluconacetobacter diazotrophicus (strain ATCC 49037 / DSM 5601 / CCUG 37298 / CIP 103539 / LMG 7603 / PAl5).